The following is a 34-amino-acid chain: Photosystem II reaction center protein Psb30 (34 aa).

The helical transmembrane segment at 6–26 threads the bilayer; sequence VIGQLLSATLIVLAGPAVIFV.

Belongs to the Psb30/Ycf12 family. In terms of assembly, PSII is composed of 1 copy each of membrane proteins PsbA, PsbB, PsbC, PsbD, PsbE, PsbF, PsbH, PsbI, PsbJ, PsbK, PsbL, PsbM, PsbT, PsbX, PsbY, PsbZ, Psb30/Ycf12, peripheral proteins of the oxygen-evolving complex and a large number of cofactors. It forms dimeric complexes.

It is found in the plastid. The protein resides in the chloroplast thylakoid membrane. Functionally, a core subunit of photosystem II (PSII), probably helps stabilize the reaction center. This Heterosigma akashiwo (strain NIES-293 / 8280G21-1) protein is Photosystem II reaction center protein Psb30.